A 1934-amino-acid polypeptide reads, in one-letter code: Tudor domain-containing protein 15 (1934 aa).

6 Tudor domains span residues 59 to 117, 289 to 347, 531 to 589, 799 to 856, 1011 to 1070, and 1342 to 1401; these read NVEI…LFEL, CDNF…FILV, KPEP…FCEL, PYEI…FLLL, DSNK…FPEL, and KPLV…FLTV. The tract at residues 1490–1510 is disordered; the sequence is VRPGDNEMKKGKSNESEGSMN. The segment covering 1491-1504 has biased composition (basic and acidic residues); sequence RPGDNEMKKGKSNE. 2 consecutive Tudor domains span residues 1574-1633 and 1780-1838; these read SIEK…IRNI and FIIP…PEEL.

This Homo sapiens (Human) protein is Tudor domain-containing protein 15 (TDRD15).